The primary structure comprises 326 residues: Probable cell division protein WhiA (326 aa).

Positions Ser-275–Ala-308 form a DNA-binding region, H-T-H motif.

This sequence belongs to the WhiA family.

In terms of biological role, involved in cell division and chromosome segregation. The polypeptide is Probable cell division protein WhiA (Thermobifida fusca (strain YX)).